A 198-amino-acid chain; its full sequence is Probable GTP-binding protein EngB (198 aa).

The region spanning 27–198 is the EngB-type G domain; it reads DLPEVALAGR…ESWDTILSEL (172 aa). GTP-binding positions include 35–42, 62–66, 80–83, 147–150, and 179–181; these read GRSNVGKS, GKTQL, DVPG, TKAD, and FSS. Residues S42 and T64 each contribute to the Mg(2+) site.

This sequence belongs to the TRAFAC class TrmE-Era-EngA-EngB-Septin-like GTPase superfamily. EngB GTPase family. Requires Mg(2+) as cofactor.

Necessary for normal cell division and for the maintenance of normal septation. This chain is Probable GTP-binding protein EngB, found in Streptococcus agalactiae serotype Ia (strain ATCC 27591 / A909 / CDC SS700).